A 589-amino-acid polypeptide reads, in one-letter code: uncharacterized protein (589 aa).

Disordered stretches follow at residues 328–365, 379–459, 525–555, and 569–589; these read LSST…EDGP, SLLG…DPSN, RSTS…GAVK, and VRGT…SRDM. A compositionally biased stretch (polar residues) spans 398–425; the sequence is VSLSSASTSARPTQRRSSLTPCSQTPQE. Residues 426 to 445 are compositionally biased toward basic and acidic residues; it reads THQHAREALTTRMESQREAN. Positions 536–545 are enriched in acidic residues; sequence QGDDDDEEDG.

This is an uncharacterized protein from Mycosarcoma maydis (Corn smut fungus).